We begin with the raw amino-acid sequence, 293 residues long: Ribonuclease HIII (293 aa).

An RNase H type-2 domain is found at 78 to 293; sequence LPLIGTDEVG…TEKAKKRLER (216 aa). Residues Asp-84, Glu-85, and Asp-187 each coordinate a divalent metal cation.

Belongs to the RNase HII family. RnhC subfamily. Requires Mn(2+) as cofactor. The cofactor is Mg(2+).

It localises to the cytoplasm. The enzyme catalyses Endonucleolytic cleavage to 5'-phosphomonoester.. Its function is as follows. Endonuclease that specifically degrades the RNA of RNA-DNA hybrids. The chain is Ribonuclease HIII from Streptococcus pneumoniae (strain 70585).